Reading from the N-terminus, the 537-residue chain is Woronin body major protein hexA (537 aa).

Basic and acidic residues-rich tracts occupy residues 1–17, 59–70, and 116–134; these read MYSV…RDAQ, DRTSHVEREDTR, and DSRV…RSEN. 4 disordered regions span residues 1–20, 59–79, 116–200, and 269–295; these read MYSV…QRTA, DRTS…PDPR, DSRV…KPVY, and PKPL…SRPS. Residues 135–144 show a composition bias toward low complexity; it reads NAKQNKNKNN. A compositionally biased stretch (basic and acidic residues) spans 272-281; it reads LETRKGDSFS.

The protein belongs to the eIF-5A family. Hex1 subfamily. Forms oligomers. Self-assembles into hexagonal rods. Binds directly or indirectly to the Woronin body tether lah.

Its subcellular location is the cell septum. The protein resides in the cytoplasm. Functionally, major component of Woronin bodies, fungal-specific organelles that occlude septal pores in order to separate intact from damaged compartments. HexA binds directly or indirectly to the Woronin body tether that in turn is anchored at the rim of the septal pore. Woronin bodies are important for stress resistance and virulence. This Aspergillus fumigatus (strain ATCC MYA-4609 / CBS 101355 / FGSC A1100 / Af293) (Neosartorya fumigata) protein is Woronin body major protein hexA.